The sequence spans 421 residues: Galactooligosaccharide-binding protein (421 aa).

The signal sequence occupies residues 1–22 (MKMAKKCSVFMLCAAVSLSLAA). C23 carries N-palmitoyl cysteine lipidation. C23 carries S-diacylglycerol cysteine lipidation. The segment at 393–421 (ATGKADPKQALDQAAETAKGQIKAKHSGK) is disordered.

This sequence belongs to the bacterial solute-binding protein 1 family. The complex is composed of two ATP-binding proteins (MsmX), two transmembrane proteins (GanP and GanQ) and a solute-binding protein (GanS).

Its subcellular location is the cell membrane. Functionally, involved in galactan degradation. Part of the ABC transporter complex GanPQS involved in the uptake of galactooligosaccharides. Binds mainly galactotetraose and galactotriose. The chain is Galactooligosaccharide-binding protein from Bacillus subtilis (strain 168).